The sequence spans 155 residues: MAPK regulated corepressor interacting protein 2 (155 aa).

At methionine 1 the chain carries N-acetylmethionine. Residues 1-59 (MYTITKGPSKLVAQRRTGPTQQQVESRLGELLKCRHSAPTPQHPRAQPPGPWPLSSPGP) form a disordered region. Arginine 35 carries the omega-N-methylarginine modification. Over residues 46–56 (AQPPGPWPLSS) the composition is skewed to pro residues. Serine 56 bears the Phosphoserine mark. Arginine 60 carries the omega-N-methylarginine modification. Residue serine 77 is modified to Phosphoserine.

Belongs to the MCRIP family. In terms of assembly, interacts with DDX6. Interacts with MCRIP1.

It is found in the cytoplasm. It localises to the stress granule. Its subcellular location is the nucleus. The sequence is that of MAPK regulated corepressor interacting protein 2 (MCRIP2) from Bos taurus (Bovine).